Reading from the N-terminus, the 416-residue chain is Putative competence-damage inducible protein (416 aa).

This sequence belongs to the CinA family.

The polypeptide is Putative competence-damage inducible protein (Levilactobacillus brevis (strain ATCC 367 / BCRC 12310 / CIP 105137 / JCM 1170 / LMG 11437 / NCIMB 947 / NCTC 947) (Lactobacillus brevis)).